Consider the following 388-residue polypeptide: Protein YnjB (388 aa).

A disordered region spans residues 333-357 (AVWGDPSVLDPQKLPDGQRESLQSR).

The chain is Protein YnjB (ynjB) from Escherichia coli (strain K12).